The primary structure comprises 342 residues: Ketol-acid reductoisomerase (NADP(+)) (342 aa).

In terms of domain architecture, KARI N-terminal Rossmann spans 2–182 (AEMFYDDDAD…GGLRAGGIKT (181 aa)). NADP(+)-binding positions include 25-28 (FGSQ), Lys48, Ser51, Ser53, and 83-86 (DHLQ). The active site involves His108. An NADP(+)-binding site is contributed by Gly134. Positions 183 to 328 (TFTEETETDL…RELRKLMAWV (146 aa)) constitute a KARI C-terminal knotted domain. Mg(2+) contacts are provided by Asp191, Glu195, Glu227, and Glu231. Ser252 lines the substrate pocket.

The protein belongs to the ketol-acid reductoisomerase family. Mg(2+) serves as cofactor.

The enzyme catalyses (2R)-2,3-dihydroxy-3-methylbutanoate + NADP(+) = (2S)-2-acetolactate + NADPH + H(+). The catalysed reaction is (2R,3R)-2,3-dihydroxy-3-methylpentanoate + NADP(+) = (S)-2-ethyl-2-hydroxy-3-oxobutanoate + NADPH + H(+). The protein operates within amino-acid biosynthesis; L-isoleucine biosynthesis; L-isoleucine from 2-oxobutanoate: step 2/4. It participates in amino-acid biosynthesis; L-valine biosynthesis; L-valine from pyruvate: step 2/4. In terms of biological role, involved in the biosynthesis of branched-chain amino acids (BCAA). Catalyzes an alkyl-migration followed by a ketol-acid reduction of (S)-2-acetolactate (S2AL) to yield (R)-2,3-dihydroxy-isovalerate. In the isomerase reaction, S2AL is rearranged via a Mg-dependent methyl migration to produce 3-hydroxy-3-methyl-2-ketobutyrate (HMKB). In the reductase reaction, this 2-ketoacid undergoes a metal-dependent reduction by NADPH to yield (R)-2,3-dihydroxy-isovalerate. This is Ketol-acid reductoisomerase (NADP(+)) from Kineococcus radiotolerans (strain ATCC BAA-149 / DSM 14245 / SRS30216).